Here is a 442-residue protein sequence, read N- to C-terminus: D-serine dehydratase (442 aa).

At Lys118 the chain carries N6-(pyridoxal phosphate)lysine.

It belongs to the serine/threonine dehydratase family. DsdA subfamily. Monomer. Pyridoxal 5'-phosphate serves as cofactor.

The enzyme catalyses D-serine = pyruvate + NH4(+). The chain is D-serine dehydratase from Escherichia coli O157:H7.